The following is a 153-amino-acid chain: Histone H2A (153 aa).

Disordered stretches follow at residues 1–27 (MDTG…VSRS) and 131–153 (KAAA…PKKA). Residues 132 to 147 (AAAAATKEPKSPAKAT) are compositionally biased toward low complexity. Residues 149-152 (SPKK) carry the SPKK motif motif.

The protein belongs to the histone H2A family. As to quaternary structure, the nucleosome is a histone octamer containing two molecules each of H2A, H2B, H3 and H4 assembled in one H3-H4 heterotetramer and two H2A-H2B heterodimers. The octamer wraps approximately 147 bp of DNA.

The protein localises to the nucleus. The protein resides in the chromosome. Core component of nucleosome. Nucleosomes wrap and compact DNA into chromatin, limiting DNA accessibility to the cellular machineries which require DNA as a template. Histones thereby play a central role in transcription regulation, DNA repair, DNA replication and chromosomal stability. DNA accessibility is regulated via a complex set of post-translational modifications of histones, also called histone code, and nucleosome remodeling. In Euphorbia esula (Leafy spurge), this protein is Histone H2A.